A 125-amino-acid polypeptide reads, in one-letter code: Prefoldin subunit beta (125 aa).

This sequence belongs to the prefoldin subunit beta family. Heterohexamer of two alpha and four beta subunits.

The protein localises to the cytoplasm. Molecular chaperone capable of stabilizing a range of proteins. Seems to fulfill an ATP-independent, HSP70-like function in archaeal de novo protein folding. The chain is Prefoldin subunit beta from Halobacterium salinarum (strain ATCC 29341 / DSM 671 / R1).